The chain runs to 94 residues: Integration host factor subunit beta (94 aa).

This sequence belongs to the bacterial histone-like protein family. In terms of assembly, heterodimer of an alpha and a beta chain.

This protein is one of the two subunits of integration host factor, a specific DNA-binding protein that functions in genetic recombination as well as in transcriptional and translational control. The sequence is that of Integration host factor subunit beta from Brucella anthropi (strain ATCC 49188 / DSM 6882 / CCUG 24695 / JCM 21032 / LMG 3331 / NBRC 15819 / NCTC 12168 / Alc 37) (Ochrobactrum anthropi).